A 262-amino-acid chain; its full sequence is Regulatory protein RecX (262 aa).

It belongs to the RecX family.

It is found in the cytoplasm. In terms of biological role, modulates RecA activity. This Photobacterium profundum (strain SS9) protein is Regulatory protein RecX.